The following is a 233-amino-acid chain: Charged multivesicular body protein 4c (233 aa).

Disordered stretches follow at residues 1–24 and 173–233; these read MSKL…SPQE and QEEL…AWAT. The segment at 1-153 is intramolecular interaction with C-terminus; sequence MSKLGKFFKG…EISEAFSQRV (153 aa). The stretch at 125 to 183 forms a coiled coil; it reads LNKIDDLMQEITEQQDIAQEISEAFSQRVGFGDDFDEDELMAELEELEQEELNKKMTNI. Residues 154–233 are intramolecular interaction with N-terminus; the sequence is GFGDDFDEDE…DIKQLAAWAT (80 aa). A compositionally biased stretch (low complexity) spans 204-216; the sequence is SSTARRSRAASSQ. Serine 210 is subject to Phosphoserine; by AURKB.

The protein belongs to the SNF7 family. In terms of assembly, probable core component of the endosomal sorting required for transport complex III (ESCRT-III). ESCRT-III components are thought to multimerize to form a flat lattice on the perimeter membrane of the endosome. Several assembly forms of ESCRT-III may exist that interact and act sequentially. Self-associates. Interacts with CHMP2A. Interacts with CHMP4A. Interacts with CHMP4B. Interacts with CHMP6. Interacts with VPS4A. Interacts with PDCD6IP; the interaction is direct. Phosphorylated at Ser-210 by AURKB during cytokinesis: together with ZFYVE19/ANCHR, phosphorylated CHMP4C retains abscission-competent VPS4 (VPS4A and/or VPS4B) at the midbody ring until abscission checkpoint signaling is terminated at late cytokinesis. As to expression, expressed in heart, spleen and kidney.

Its subcellular location is the cytoplasm. It is found in the cytosol. It localises to the late endosome membrane. The protein localises to the midbody. The protein resides in the midbody ring. Its function is as follows. Probable core component of the endosomal sorting required for transport complex III (ESCRT-III) which is involved in multivesicular bodies (MVBs) formation and sorting of endosomal cargo proteins into MVBs. MVBs contain intraluminal vesicles (ILVs) that are generated by invagination and scission from the limiting membrane of the endosome and mostly are delivered to lysosomes enabling degradation of membrane proteins, such as stimulated growth factor receptors, lysosomal enzymes and lipids. The MVB pathway appears to require the sequential function of ESCRT-O, -I,-II and -III complexes. ESCRT-III proteins mostly dissociate from the invaginating membrane before the ILV is released. The ESCRT machinery also functions in topologically equivalent membrane fission events, such as the terminal stages of cytokinesis and the budding of enveloped viruses (HIV-1 and other lentiviruses). Key component of the cytokinesis checkpoint, a process required to delay abscission to prevent both premature resolution of intercellular chromosome bridges and accumulation of DNA damage: upon phosphorylation by AURKB, together with ZFYVE19/ANCHR, retains abscission-competent VPS4 (VPS4A and/or VPS4B) at the midbody ring until abscission checkpoint signaling is terminated at late cytokinesis. Deactivation of AURKB results in dephosphorylation of CHMP4C followed by its dissociation from ANCHR and VPS4 and subsequent abscission. ESCRT-III proteins are believed to mediate the necessary vesicle extrusion and/or membrane fission activities, possibly in conjunction with the AAA ATPase VPS4. Involved in HIV-1 p6- and p9-dependent virus release. CHMP4A/B/C are required for the exosomal release of SDCBP, CD63 and syndecan. The polypeptide is Charged multivesicular body protein 4c (CHMP4C) (Homo sapiens (Human)).